Reading from the N-terminus, the 273-residue chain is Type II pantothenate kinase (273 aa).

Residue 8-15 participates in ATP binding; it reads DAGGTLTK. Glutamate 76 functions as the Proton acceptor in the catalytic mechanism. Residues threonine 105, 127–131, phenylalanine 143, and serine 230 contribute to the ATP site; that span reads GGTIM.

This sequence belongs to the type II pantothenate kinase family. Homodimer.

It is found in the cytoplasm. It catalyses the reaction (R)-pantothenate + ATP = (R)-4'-phosphopantothenate + ADP + H(+). It functions in the pathway cofactor biosynthesis; coenzyme A biosynthesis; CoA from (R)-pantothenate: step 1/5. Functionally, catalyzes the phosphorylation of pantothenate (Pan), the first step in CoA biosynthesis. This is Type II pantothenate kinase from Bacillus cereus (strain ATCC 14579 / DSM 31 / CCUG 7414 / JCM 2152 / NBRC 15305 / NCIMB 9373 / NCTC 2599 / NRRL B-3711).